Here is a 168-residue protein sequence, read N- to C-terminus: Photosystem I assembly protein Ycf3 (168 aa).

3 TPR repeats span residues 35–68, 72–105, and 120–153; these read AFAY…EMDP, SYIL…NPFL, and GEQA…TPGN.

Belongs to the Ycf3 family.

The protein resides in the plastid membrane. Functionally, essential for the assembly of the photosystem I (PSI) complex. May act as a chaperone-like factor to guide the assembly of the PSI subunits. The polypeptide is Photosystem I assembly protein Ycf3 (Cuscuta gronovii (Common dodder)).